Here is a 58-residue protein sequence, read N- to C-terminus: Large ribosomal subunit protein bL32c (58 aa).

The protein belongs to the bacterial ribosomal protein bL32 family.

It localises to the plastid. Its subcellular location is the chloroplast. In Chaetosphaeridium globosum (Charophycean green alga), this protein is Large ribosomal subunit protein bL32c.